Consider the following 159-residue polypeptide: UPF0262 protein PHZ_c2197 (159 aa).

This sequence belongs to the UPF0262 family.

The sequence is that of UPF0262 protein PHZ_c2197 from Phenylobacterium zucineum (strain HLK1).